Reading from the N-terminus, the 132-residue chain is Small ribosomal subunit protein uS8 (132 aa).

The protein belongs to the universal ribosomal protein uS8 family. In terms of assembly, part of the 30S ribosomal subunit. Contacts proteins S5 and S12.

Its function is as follows. One of the primary rRNA binding proteins, it binds directly to 16S rRNA central domain where it helps coordinate assembly of the platform of the 30S subunit. This Streptococcus sanguinis (strain SK36) protein is Small ribosomal subunit protein uS8.